Reading from the N-terminus, the 107-residue chain is Universal stress protein B homolog (107 aa).

A run of 2 helical transmembrane segments spans residues 6 to 25 and 89 to 106; these read TILFALMLVTAINVARYVTA and LFILSGSLLVLTTVVAFM.

Belongs to the universal stress protein B family.

It localises to the cell inner membrane. This chain is Universal stress protein B homolog, found in Vibrio cholerae serotype O1 (strain ATCC 39541 / Classical Ogawa 395 / O395).